We begin with the raw amino-acid sequence, 109 residues long: uncharacterized protein (109 aa).

The segment at 36–109 is disordered; that stretch reads NSSNNLNNNN…KKKKKKRRVK (74 aa). Over residues 39–88 the composition is skewed to low complexity; it reads NNLNNNNFNENNLKNNNNRNGNNNNNNNNNNNNNNNNNNNNNNNNNNNNN. The span at 99-109 shows a compositional bias: basic residues; it reads QKKKKKKRRVK.

This is an uncharacterized protein from Dictyostelium discoideum (Social amoeba).